A 237-amino-acid chain; its full sequence is Insulin-like growth factor-binding protein 6 (237 aa).

The signal sequence occupies residues 1 to 25 (MTPHRLLPPLLLTLLLAARPGGALA). Residues 26-105 (RCPGCGQGVS…LQGRGRCGRA (80 aa)) enclose the IGFBP N-terminal domain. Cystine bridges form between Cys27-Cys30, Cys38-Cys42, Cys55-Cys61, Cys69-Cys82, and Cys76-Cys102. Residues 101–158 (RCGRARTPSGENPKESKPQAGTARSQDVNRRDQQRNSGTSTTPSRSNSGGVQDTEMGP) are disordered. Positions 135 to 151 (RNSGTSTTPSRSNSGGV) are enriched in polar residues. A Thyroglobulin type-1 domain is found at 156-231 (MGPCRKHLDS…SEGGDGSSLC (76 aa)). Disulfide bonds link Cys159/Cys186, Cys197/Cys208, and Cys210/Cys231. The disordered stretch occupies residues 215 to 237 (GQPLPGSSEGGDGSSLCPTGSSG).

In terms of assembly, interacts (via C-terminal domain) with PHB2. Post-translationally, O-glycosylated.

It is found in the secreted. In terms of biological role, IGF-binding proteins prolong the half-life of the IGFs and have been shown to either inhibit or stimulate the growth promoting effects of the IGFs on cell culture. They alter the interaction of IGFs with their cell surface receptors. Activates the MAPK signaling pathway and induces cell migration. The chain is Insulin-like growth factor-binding protein 6 (IGFBP6) from Bos taurus (Bovine).